A 271-amino-acid polypeptide reads, in one-letter code: Short chain dehydrogenase asqE (271 aa).

Residues Ile-22, Asp-70, and Asn-99 each coordinate NADP(+). Residues Ser-152 and Ser-153 each act as proton donor in the active site. Residues Tyr-167, Lys-171, and Thr-203 each coordinate NADP(+). Catalysis depends on Tyr-167, which acts as the Proton acceptor. The Lowers pKa of active site Tyr role is filled by Lys-171.

The protein belongs to the short-chain dehydrogenases/reductases (SDR) family.

The enzyme catalyses a primary alcohol + NAD(+) = an aldehyde + NADH + H(+). The catalysed reaction is a secondary alcohol + NAD(+) = a ketone + NADH + H(+). It participates in secondary metabolite biosynthesis. The protein operates within alkaloid biosynthesis. It functions in the pathway mycotoxin biosynthesis. Functionally, short chain dehydrogenase; part of the gene cluster that mediates the biosynthesis of the aspoquinolone mycotoxins. The role of asqE within the aspoquinolone pathway has still to be determined. The first step of the pathway is catalyzed by the nonribosomal peptide synthetase asqK that condenses anthranilic acid and O-methyl-L-tyrosine to produce 4'-methoxycyclopeptin. 4'-methoxycyclopeptin is then converted to 4'-methoxydehydrocyclopeptin by the ketoglutarate-dependent dioxygenase asqJ. AsqJ also converts its first product 4'-methoxydehydrocyclopeptin to 4'-methoxycyclopenin. The following conversion of 4'-methoxycyclopenin into 4'-methoxyviridicatin is catalyzed by the cyclopenase asqI. 4'-methoxyviridicatin is the precursor of quinolone natural products, and is further converted to quinolinone B. The prenyltransferase asqH1 then catalyzes the canonical Friedel-Crafts alkylation of quinolinone B with dimethylallyl cation to yield dimethylallyl quinolone, which is subjected to FAD-dependent dehydrogenation by the FAD-linked oxidoreductase asqF to yield conjugated aryl diene. The delta(3') double bond then serves as the site of the second alkylation with DMAPP catalyzed by the prenyltransferase asqH2 to yield a carbenium ion intermediate, which can be attacked by H(2)O to yield a styrenyl quinolone containing a C3'-hydroxyprenyl chain. The FAD-dependent monooxygenase asqG performs epoxidation of the terminal C7'-C8' olefin. Finally, after dehydratation of the epoxide at C3 by asqC, the quinolone epoxide rearrangement protein asqO catalyzes an enzymatic 3-exo-tet cyclization to yield the cyclopropyl-THF ring system in aspoquinolone. The protein is Short chain dehydrogenase asqE of Emericella nidulans (strain FGSC A4 / ATCC 38163 / CBS 112.46 / NRRL 194 / M139) (Aspergillus nidulans).